We begin with the raw amino-acid sequence, 458 residues long: MLLLLPEITLTLIALLGQFFAVMIPNKNRIISNIIILLCILSIFLTFKYSSYEGVWYSFATGINIGISKSIVLLFTIISMIIYRDYSILVADELKFEFITLMLLSVVGIFVAISSRNFLLLFCGMELTALTSYALAGFKLNDMKSSEGALKYFILGSLVSCLSLFGISFIYGFGGSLQFEDILYKLNDNSGMNLGLIIGIILFLSSIFFKLSSVPLHFWVPDVYEGSPITSVTYFNAASKIGMVIVLLNISKLIIGNYYPINYNLIKIIAILSMLFGAFGAIRQTSLKRLMAYSTILNIGYVLIGVLLHNQEGYKAALLYMLIYAVGSIGFFTCLIILLGKDVDKASFKTIQGIAEYHKTIAAVISIVMFSMIGIPPLTGFFGKYYLFYQAINQEEFALAYCGIFTSVVAAFYYLKVVKAMYFSKKIEIIKLPMQYGLLLINYLVVGFLLLGSFIISF.

A run of 14 helical transmembrane segments spans residues 2-22, 30-50, 62-82, 94-114, 118-138, 153-173, 194-214, 235-255, 261-281, 290-310, 318-338, 361-381, 397-417, and 438-458; these read LLLL…FFAV, IISN…FKYS, GINI…SMII, LKFE…VAIS, FLLL…LAGF, FILG…IYGF, LGLI…LSSV, FNAA…KLII, INYN…AFGA, LMAY…LLHN, LLYM…LIIL, IAAV…LTGF, FALA…YLKV, and LLLI…IISF.

Belongs to the complex I subunit 2 family. As to quaternary structure, NDH-1 is composed of 14 different subunits. Subunits NuoA, H, J, K, L, M, N constitute the membrane sector of the complex.

The protein localises to the cell inner membrane. It catalyses the reaction a quinone + NADH + 5 H(+)(in) = a quinol + NAD(+) + 4 H(+)(out). Its function is as follows. NDH-1 shuttles electrons from NADH, via FMN and iron-sulfur (Fe-S) centers, to quinones in the respiratory chain. The immediate electron acceptor for the enzyme in this species is believed to be ubiquinone. Couples the redox reaction to proton translocation (for every two electrons transferred, four hydrogen ions are translocated across the cytoplasmic membrane), and thus conserves the redox energy in a proton gradient. In Rickettsia conorii (strain ATCC VR-613 / Malish 7), this protein is NADH-quinone oxidoreductase subunit N.